The following is a 238-amino-acid chain: Sugar fermentation stimulation protein homolog (238 aa).

This sequence belongs to the SfsA family.

The protein is Sugar fermentation stimulation protein homolog of Haemophilus influenzae (strain ATCC 51907 / DSM 11121 / KW20 / Rd).